The chain runs to 130 residues: Small ribosomal subunit protein bS18 (130 aa).

Basic and acidic residues-rich tracts occupy residues 98 to 108 (KKMEESVKSAE) and 117 to 130 (EESKPKRTRKAKTE). Residues 98 to 130 (KKMEESVKSAEPKATAEATEESKPKRTRKAKTE) are disordered.

It belongs to the bacterial ribosomal protein bS18 family. Part of the 30S ribosomal subunit. Forms a tight heterodimer with protein bS6.

Its function is as follows. Binds as a heterodimer with protein bS6 to the central domain of the 16S rRNA, where it helps stabilize the platform of the 30S subunit. This chain is Small ribosomal subunit protein bS18, found in Metamycoplasma arthritidis (strain 158L3-1) (Mycoplasma arthritidis).